The primary structure comprises 520 residues: Ribonuclease Y (520 aa).

A helical membrane pass occupies residues 3-23 (FILVLCTVSSLFVGGGTGIFL). The region spanning 209–272 (TVTAVTLPSE…QVAKMALERL (64 aa)) is the KH domain. An HD domain is found at 335–429 (VLRHSIEVAS…VQASDCLSGA (95 aa)).

This sequence belongs to the RNase Y family.

The protein resides in the cell membrane. Endoribonuclease that initiates mRNA decay. The protein is Ribonuclease Y of Lawsonia intracellularis (strain PHE/MN1-00).